We begin with the raw amino-acid sequence, 338 residues long: Fructose-1,6-bisphosphatase 1 (338 aa).

Position 2 is an N-acetylalanine (A2). AMP contacts are provided by residues 18 to 22 (VMEEG) and 28 to 32 (TGEMT). Mg(2+) contacts are provided by D69 and E98. An AMP-binding site is contributed by 113 to 114 (KY). Residues D119, L121, and D122 each coordinate Mg(2+). Residue 122–125 (DGSS) participates in substrate binding. R141 lines the AMP pocket. K151 is modified (N6-succinyllysine). Substrate is bound by residues 213 to 216 (NEGY), 244 to 249 (RYVGSM), Y265, and 275 to 277 (KLR). A phosphotyrosine mark is found at Y216, Y245, and Y265. E281 contributes to the Mg(2+) binding site.

This sequence belongs to the FBPase class 1 family. Homotetramer. The cofactor is Mg(2+).

It carries out the reaction beta-D-fructose 1,6-bisphosphate + H2O = beta-D-fructose 6-phosphate + phosphate. It functions in the pathway carbohydrate biosynthesis; gluconeogenesis. Its activity is regulated as follows. Subject to complex allosteric regulation. The enzyme can assume an active R-state, or an inactive T-state. Intermediate conformations may exist. AMP acts as an allosteric inhibitor. AMP binding affects the turnover of bound substrate and not the affinity for substrate. Fructose 2,6-bisphosphate acts as a competitive inhibitor. Fructose 2,6-bisphosphate and AMP have synergistic effects. In terms of biological role, catalyzes the hydrolysis of fructose 1,6-bisphosphate to fructose 6-phosphate in the presence of divalent cations, acting as a rate-limiting enzyme in gluconeogenesis. Plays a role in regulating glucose sensing and insulin secretion of pancreatic beta-cells. Appears to modulate glycerol gluconeogenesis in liver. Important regulator of appetite and adiposity; increased expression of the protein in liver after nutrient excess increases circulating satiety hormones and reduces appetite-stimulating neuropeptides and thus seems to provide a feedback mechanism to limit weight gain. The polypeptide is Fructose-1,6-bisphosphatase 1 (FBP1) (Oryctolagus cuniculus (Rabbit)).